The following is a 468-amino-acid chain: Methionine aminopeptidase 2 (468 aa).

The span at 63 to 74 (AAKEATKKDAKG) shows a compositional bias: basic and acidic residues. Residues 63 to 87 (AAKEATKKDAKGGKGKANGSAAATA) form a disordered region. His-219 is a substrate binding site. Residues Asp-239, Asp-250, and His-319 each contribute to the a divalent metal cation site. Residue His-327 participates in substrate binding. Residues Glu-352 and Glu-449 each coordinate a divalent metal cation.

This sequence belongs to the peptidase M24A family. Methionine aminopeptidase eukaryotic type 2 subfamily. Co(2+) is required as a cofactor. Zn(2+) serves as cofactor. Requires Mn(2+) as cofactor. The cofactor is Fe(2+).

It is found in the cytoplasm. It carries out the reaction Release of N-terminal amino acids, preferentially methionine, from peptides and arylamides.. Its activity is regulated as follows. Inhibited by the fumagillin analog, TNP-470. In terms of biological role, cotranslationally removes the N-terminal methionine from nascent proteins. The N-terminal methionine is often cleaved when the second residue in the primary sequence is small and uncharged (Met-Ala-, Cys, Gly, Pro, Ser, Thr, or Val). Required for germ cell proliferation and/or differentiation. The protein is Methionine aminopeptidase 2 of Caenorhabditis elegans.